Here is a 20-residue protein sequence, read N- to C-terminus: Ferric reductase A (20 aa).

In terms of assembly, monomer.

It catalyses the reaction 2 a Fe(II)-siderophore + NAD(+) + H(+) = 2 a Fe(III)-siderophore + NADH. In terms of biological role, reductase activity that acts on Fe(3+)-chelates and NADH as an electron donor and requires the presence of FMN for full activity. May play a role in iron uptake. This is Ferric reductase A (ferA) from Paracoccus denitrificans.